We begin with the raw amino-acid sequence, 666 residues long: Putative L-type lectin-domain containing receptor kinase V.1 (666 aa).

A signal peptide spans 1–18; that stretch reads MVLLLFLVLFFVPESVVC. Residues 19 to 289 lie on the Extracellular side of the membrane; it reads QRPNPNGVEF…WIQSPNGILT (271 aa). Residues 27 to 257 form a legume-lectin like region; the sequence is EFNTSGNMYT…SHYILGWTFK (231 aa). Residues Asn29, Asn74, Asn123, Asn176, Asn204, and Asn259 are each glycosylated (N-linked (GlcNAc...) asparagine). The helical transmembrane segment at 290–310 threads the bilayer; sequence ISLTVSGVIILIILSLSLWLF. At 311-666 the chain is on the cytoplasmic side; the sequence is LKRKKLLEVL…FTESFVSHGR (356 aa). The region spanning 344–625 is the Protein kinase domain; that stretch reads FKDTEVLGKG…SVAQLPHNLL (282 aa). ATP-binding positions include 350-358 and Lys373; that span reads LGKGGFGKV. The active-site Proton acceptor is the Asp469.

It in the C-terminal section; belongs to the protein kinase superfamily. Ser/Thr protein kinase family. The protein in the N-terminal section; belongs to the leguminous lectin family.

It is found in the cell membrane. The enzyme catalyses L-seryl-[protein] + ATP = O-phospho-L-seryl-[protein] + ADP + H(+). It carries out the reaction L-threonyl-[protein] + ATP = O-phospho-L-threonyl-[protein] + ADP + H(+). The protein is Putative L-type lectin-domain containing receptor kinase V.1 (LECRK51) of Arabidopsis thaliana (Mouse-ear cress).